A 210-amino-acid chain; its full sequence is Holliday junction resolvase RecU (210 aa).

The Mg(2+) site is built by threonine 93, aspartate 95, glutamate 108, and glutamine 127.

This sequence belongs to the RecU family. Requires Mg(2+) as cofactor.

The protein localises to the cytoplasm. It carries out the reaction Endonucleolytic cleavage at a junction such as a reciprocal single-stranded crossover between two homologous DNA duplexes (Holliday junction).. Functionally, endonuclease that resolves Holliday junction intermediates in genetic recombination. Cleaves mobile four-strand junctions by introducing symmetrical nicks in paired strands. Promotes annealing of linear ssDNA with homologous dsDNA. Required for DNA repair, homologous recombination and chromosome segregation. This chain is Holliday junction resolvase RecU, found in Lactobacillus helveticus (strain DPC 4571).